The following is a 255-amino-acid chain: tRNA pseudouridine synthase A (255 aa).

Residue Asp43 is the Nucleophile of the active site. Tyr94 serves as a coordination point for substrate.

This sequence belongs to the tRNA pseudouridine synthase TruA family.

It catalyses the reaction uridine(38/39/40) in tRNA = pseudouridine(38/39/40) in tRNA. Functionally, formation of pseudouridine at positions 38, 39 and 40 in the anticodon stem and loop of transfer RNAs. The sequence is that of tRNA pseudouridine synthase A from Pyrobaculum neutrophilum (strain DSM 2338 / JCM 9278 / NBRC 100436 / V24Sta) (Thermoproteus neutrophilus).